The primary structure comprises 110 residues: Large ribosomal subunit protein uL24 (110 aa).

This sequence belongs to the universal ribosomal protein uL24 family. Part of the 50S ribosomal subunit.

Functionally, one of two assembly initiator proteins, it binds directly to the 5'-end of the 23S rRNA, where it nucleates assembly of the 50S subunit. In terms of biological role, one of the proteins that surrounds the polypeptide exit tunnel on the outside of the subunit. The chain is Large ribosomal subunit protein uL24 from Caldicellulosiruptor saccharolyticus (strain ATCC 43494 / DSM 8903 / Tp8T 6331).